We begin with the raw amino-acid sequence, 375 residues long: Nicotinate-nucleotide--dimethylbenzimidazole phosphoribosyltransferase (375 aa).

Catalysis depends on Glu-323, which acts as the Proton acceptor. Positions Leu-344 to Glu-375 are disordered. The segment covering Leu-351 to Glu-375 has biased composition (acidic residues).

It belongs to the CobT family.

The catalysed reaction is 5,6-dimethylbenzimidazole + nicotinate beta-D-ribonucleotide = alpha-ribazole 5'-phosphate + nicotinate + H(+). It participates in nucleoside biosynthesis; alpha-ribazole biosynthesis; alpha-ribazole from 5,6-dimethylbenzimidazole: step 1/2. In terms of biological role, catalyzes the synthesis of alpha-ribazole-5'-phosphate from nicotinate mononucleotide (NAMN) and 5,6-dimethylbenzimidazole (DMB). The chain is Nicotinate-nucleotide--dimethylbenzimidazole phosphoribosyltransferase from Streptomyces avermitilis (strain ATCC 31267 / DSM 46492 / JCM 5070 / NBRC 14893 / NCIMB 12804 / NRRL 8165 / MA-4680).